Here is a 156-residue protein sequence, read N- to C-terminus: 6,7-dimethyl-8-ribityllumazine synthase (156 aa).

5-amino-6-(D-ribitylamino)uracil contacts are provided by residues F22, 57–59, and 81–83; these read AYE and TVI. 86–87 is a binding site for (2S)-2-hydroxy-3-oxobutyl phosphate; the sequence is GT. The active-site Proton donor is H89. F114 is a binding site for 5-amino-6-(D-ribitylamino)uracil. R128 provides a ligand contact to (2S)-2-hydroxy-3-oxobutyl phosphate.

It belongs to the DMRL synthase family. Forms an icosahedral capsid composed of 60 subunits, arranged as a dodecamer of pentamers.

The enzyme catalyses (2S)-2-hydroxy-3-oxobutyl phosphate + 5-amino-6-(D-ribitylamino)uracil = 6,7-dimethyl-8-(1-D-ribityl)lumazine + phosphate + 2 H2O + H(+). It functions in the pathway cofactor biosynthesis; riboflavin biosynthesis; riboflavin from 2-hydroxy-3-oxobutyl phosphate and 5-amino-6-(D-ribitylamino)uracil: step 1/2. Its function is as follows. Catalyzes the formation of 6,7-dimethyl-8-ribityllumazine by condensation of 5-amino-6-(D-ribitylamino)uracil with 3,4-dihydroxy-2-butanone 4-phosphate. This is the penultimate step in the biosynthesis of riboflavin. In Enterobacter sp. (strain 638), this protein is 6,7-dimethyl-8-ribityllumazine synthase.